The primary structure comprises 144 residues: HTH-type transcriptional repressor NsrR (144 aa).

Residues Gln-2 to Asp-129 form the HTH rrf2-type domain. The H-T-H motif DNA-binding region spans Ile-28–Gln-51. Residues Cys-91, Cys-96, and Cys-102 each coordinate [2Fe-2S] cluster.

The cofactor is [2Fe-2S] cluster.

Functionally, nitric oxide-sensitive repressor of genes involved in protecting the cell against nitrosative stress. May require iron for activity. The sequence is that of HTH-type transcriptional repressor NsrR from Photobacterium profundum (strain SS9).